Here is a 301-residue protein sequence, read N- to C-terminus: Phosphate butyryltransferase (301 aa).

The protein belongs to the phosphate acetyltransferase and butyryltransferase family.

It catalyses the reaction butanoyl-CoA + phosphate = butanoyl phosphate + CoA. It participates in lipid metabolism; butanoate metabolism. Catalyzes the conversion of butyryl-CoA through butyryl phosphate to butyrate. The protein is Phosphate butyryltransferase (ptb) of Clostridium acetobutylicum (strain ATCC 824 / DSM 792 / JCM 1419 / IAM 19013 / LMG 5710 / NBRC 13948 / NRRL B-527 / VKM B-1787 / 2291 / W).